Here is a 428-residue protein sequence, read N- to C-terminus: D-alanine--D-alanine ligase (428 aa).

Residues 205-424 (KVVLDAAGIP…YTELITRLIE (220 aa)) form the ATP-grasp domain. An ATP-binding site is contributed by 237 to 299 (DAGLTYPLFV…EQGIDGREIE (63 aa)). Mg(2+) contacts are provided by Asp-378, Glu-391, and Asn-393.

This sequence belongs to the D-alanine--D-alanine ligase family. Mg(2+) serves as cofactor. Requires Mn(2+) as cofactor.

The protein localises to the cytoplasm. The catalysed reaction is 2 D-alanine + ATP = D-alanyl-D-alanine + ADP + phosphate + H(+). Its pathway is cell wall biogenesis; peptidoglycan biosynthesis. In terms of biological role, cell wall formation. In Bifidobacterium longum (strain NCC 2705), this protein is D-alanine--D-alanine ligase.